We begin with the raw amino-acid sequence, 759 residues long: Phosphoribosylformylglycinamidine synthase subunit PurL (759 aa).

Residue H34 is part of the active site. Y37 serves as a coordination point for ATP. Position 95 (E95) interacts with Mg(2+). Residues 96 to 99 (SHNH) and R118 contribute to the substrate site. H97 serves as the catalytic Proton acceptor. Residue D119 coordinates Mg(2+). Q243 is a substrate binding site. Position 271 (D271) interacts with Mg(2+). 315–317 (ESQ) is a substrate binding site. Residues 388–422 (DGAPMNDLASESPTQPDRDLPDPEPSLDEAVESVV) are disordered. Residues D520 and G557 each coordinate ATP. Residue N558 coordinates Mg(2+). S560 provides a ligand contact to substrate.

It belongs to the FGAMS family. Monomer. Part of the FGAM synthase complex composed of 1 PurL, 1 PurQ and 2 PurS subunits.

The protein resides in the cytoplasm. The catalysed reaction is N(2)-formyl-N(1)-(5-phospho-beta-D-ribosyl)glycinamide + L-glutamine + ATP + H2O = 2-formamido-N(1)-(5-O-phospho-beta-D-ribosyl)acetamidine + L-glutamate + ADP + phosphate + H(+). Its pathway is purine metabolism; IMP biosynthesis via de novo pathway; 5-amino-1-(5-phospho-D-ribosyl)imidazole from N(2)-formyl-N(1)-(5-phospho-D-ribosyl)glycinamide: step 1/2. In terms of biological role, part of the phosphoribosylformylglycinamidine synthase complex involved in the purines biosynthetic pathway. Catalyzes the ATP-dependent conversion of formylglycinamide ribonucleotide (FGAR) and glutamine to yield formylglycinamidine ribonucleotide (FGAM) and glutamate. The FGAM synthase complex is composed of three subunits. PurQ produces an ammonia molecule by converting glutamine to glutamate. PurL transfers the ammonia molecule to FGAR to form FGAM in an ATP-dependent manner. PurS interacts with PurQ and PurL and is thought to assist in the transfer of the ammonia molecule from PurQ to PurL. The polypeptide is Phosphoribosylformylglycinamidine synthase subunit PurL (Halorubrum lacusprofundi (strain ATCC 49239 / DSM 5036 / JCM 8891 / ACAM 34)).